We begin with the raw amino-acid sequence, 185 residues long: Putative manganese efflux pump MntP (185 aa).

Helical transmembrane passes span 4–24, 40–60, 64–84, 108–128, 134–154, and 165–185; these read LFIG…TDAF, IFHI…AGMA, LLSG…LFIL, LLLF…SLGM, FLAV…GLLA, and YSEA…LLPV.

The protein belongs to the MntP (TC 9.B.29) family.

The protein resides in the cell membrane. Functionally, probably functions as a manganese efflux pump. The sequence is that of Putative manganese efflux pump MntP from Bacillus velezensis (strain DSM 23117 / BGSC 10A6 / LMG 26770 / FZB42) (Bacillus amyloliquefaciens subsp. plantarum).